Consider the following 88-residue polypeptide: Molybdopterin synthase sulfur carrier subunit (88 aa).

A 1-thioglycine; alternate modification is found at glycine 88. Glycine 88 carries the post-translational modification Glycyl adenylate; alternate.

The protein belongs to the MoaD family. MOCS2A subfamily. In terms of assembly, heterotetramer; composed of 2 small (MOCS2A) and 2 large (MOCS2B) subunits. C-terminal thiocarboxylation occurs in 2 steps, it is first acyl-adenylated (-COAMP) via the hesA/moeB/thiF part of MOCS3, then thiocarboxylated (-COSH) via the rhodanese domain of MOCS3.

The protein localises to the cytoplasm. It is found in the cytosol. It functions in the pathway cofactor biosynthesis; molybdopterin biosynthesis. In terms of biological role, acts as a sulfur carrier required for molybdopterin biosynthesis. Component of the molybdopterin synthase complex that catalyzes the conversion of precursor Z into molybdopterin by mediating the incorporation of 2 sulfur atoms into precursor Z to generate a dithiolene group. In the complex, serves as sulfur donor by being thiocarboxylated (-COSH) at its C-terminus by MOCS3. After interaction with MOCS2B, the sulfur is then transferred to precursor Z to form molybdopterin. The protein is Molybdopterin synthase sulfur carrier subunit of Mus musculus (Mouse).